The following is a 487-amino-acid chain: Protein nucleotidyltransferase YdiU (487 aa).

G90, G92, R93, K113, D125, G126, R176, and R183 together coordinate ATP. D252 (proton acceptor) is an active-site residue. The Mg(2+) site is built by N253 and D262. D262 is an ATP binding site.

Belongs to the SELO family. Requires Mg(2+) as cofactor. The cofactor is Mn(2+).

It carries out the reaction L-seryl-[protein] + ATP = 3-O-(5'-adenylyl)-L-seryl-[protein] + diphosphate. The catalysed reaction is L-threonyl-[protein] + ATP = 3-O-(5'-adenylyl)-L-threonyl-[protein] + diphosphate. The enzyme catalyses L-tyrosyl-[protein] + ATP = O-(5'-adenylyl)-L-tyrosyl-[protein] + diphosphate. It catalyses the reaction L-histidyl-[protein] + UTP = N(tele)-(5'-uridylyl)-L-histidyl-[protein] + diphosphate. It carries out the reaction L-seryl-[protein] + UTP = O-(5'-uridylyl)-L-seryl-[protein] + diphosphate. The catalysed reaction is L-tyrosyl-[protein] + UTP = O-(5'-uridylyl)-L-tyrosyl-[protein] + diphosphate. Nucleotidyltransferase involved in the post-translational modification of proteins. It can catalyze the addition of adenosine monophosphate (AMP) or uridine monophosphate (UMP) to a protein, resulting in modifications known as AMPylation and UMPylation. In Pseudomonas fluorescens (strain ATCC BAA-477 / NRRL B-23932 / Pf-5), this protein is Protein nucleotidyltransferase YdiU.